The following is an 802-amino-acid chain: Outer membrane usher protein PefC (802 aa).

An N-terminal signal peptide occupies residues 1-24 (MSFHHRVFKLSALSLALFSHLSFA). C782 and C801 form a disulfide bridge.

This sequence belongs to the fimbrial export usher family.

The protein resides in the cell outer membrane. Involved in the export and assembly of FimA fimbrial subunits across the outer membrane. This Salmonella typhimurium (strain LT2 / SGSC1412 / ATCC 700720) protein is Outer membrane usher protein PefC (pefC).